The primary structure comprises 342 residues: 3-isopropylmalate dehydrogenase (342 aa).

Arg-92, Arg-102, Arg-126, and Asp-216 together coordinate substrate. Positions 216, 240, and 244 each coordinate Mg(2+). Position 276–288 (276–288) interacts with NAD(+); the sequence is GSAPDIAGKGIAD.

The protein belongs to the isocitrate and isopropylmalate dehydrogenases family. LeuB type 2 subfamily. In terms of assembly, homodimer. It depends on Mg(2+) as a cofactor. Mn(2+) is required as a cofactor.

It localises to the cytoplasm. It catalyses the reaction (2R,3S)-3-isopropylmalate + NAD(+) = 4-methyl-2-oxopentanoate + CO2 + NADH. Its pathway is amino-acid biosynthesis; L-leucine biosynthesis; L-leucine from 3-methyl-2-oxobutanoate: step 3/4. Catalyzes the oxidation of 3-carboxy-2-hydroxy-4-methylpentanoate (3-isopropylmalate) to 3-carboxy-4-methyl-2-oxopentanoate. The product decarboxylates to 4-methyl-2 oxopentanoate. This chain is 3-isopropylmalate dehydrogenase, found in Corynebacterium kroppenstedtii (strain DSM 44385 / JCM 11950 / CIP 105744 / CCUG 35717).